Consider the following 466-residue polypeptide: Cysteine--tRNA ligase (466 aa).

Cysteine 28 serves as a coordination point for Zn(2+). The 'HIGH' region signature appears at 30-40; the sequence is PTVYNYIHIGN. Residues cysteine 208, histidine 233, and glutamate 237 each coordinate Zn(2+). The short motif at 265–269 is the 'KMSKS' region element; it reads KMSKS. Lysine 268 contributes to the ATP binding site.

Belongs to the class-I aminoacyl-tRNA synthetase family. Monomer. Zn(2+) is required as a cofactor.

Its subcellular location is the cytoplasm. The enzyme catalyses tRNA(Cys) + L-cysteine + ATP = L-cysteinyl-tRNA(Cys) + AMP + diphosphate. This is Cysteine--tRNA ligase from Staphylococcus carnosus (strain TM300).